A 115-amino-acid chain; its full sequence is Fluoride-specific ion channel FluC 4 (115 aa).

2 consecutive transmembrane segments (helical) span residues 19 to 39 and 42 to 62; these read WGTF…AGLG and LGGI…LLGG. The Na(+) site is built by Gly61 and Thr64. The helical transmembrane segment at 89–109 threads the bilayer; it reads IVASALLCVLAVAAGYGGIMW.

Belongs to the fluoride channel Fluc/FEX (TC 1.A.43) family.

It is found in the cell inner membrane. It carries out the reaction fluoride(in) = fluoride(out). Na(+) is not transported, but it plays an essential structural role and its presence is essential for fluoride channel function. Fluoride-specific ion channel. Important for reducing fluoride concentration in the cell, thus reducing its toxicity. This is Fluoride-specific ion channel FluC 4 from Brucella melitensis biotype 1 (strain ATCC 23456 / CCUG 17765 / NCTC 10094 / 16M).